Here is a 1954-residue protein sequence, read N- to C-terminus: Integrin beta-like protein C (1954 aa).

The N-terminal stretch at 1–20 is a signal peptide; that stretch reads MNKLFYLFILIASLFILTDA. The Extracellular segment spans residues 21-1883; that stretch reads SHFRFGTISW…TTTQTNDNKT (1863 aa). Residues Asn138 and Asn354 are each glycosylated (N-linked (GlcNAc...) asparagine). Positions 428-465 constitute an EGF-like domain; the sequence is YGENCVAVPPCVNGVPNSGINGDGKCLCSNGWTGADCS. 2 disulfide bridges follow: Cys438/Cys453 and Cys455/Cys464. N-linked (GlcNAc...) asparagine glycosylation occurs at Asn479. The VWFA domain occupies 521 to 706; that stretch reads DVYVLVDANL…TGVKNVLSKI (186 aa). N-linked (GlcNAc...) asparagine glycosylation is found at Asn1348, Asn1382, Asn1628, Asn1678, Asn1742, Asn1770, Asn1820, Asn1860, and Asn1881. A helical transmembrane segment spans residues 1884 to 1904; that stretch reads VLTGAIAGAAAGTALIAAAAW. At 1905-1954 the chain is on the cytoplasmic side; that stretch reads RLLRKAAPPTDTFFSEAAFLGDGVSSNPLYEQSASAAENPLYQSASDTTD.

It belongs to the SIB family. As to quaternary structure, interacts with talA/talin.

Its subcellular location is the membrane. Implicated in cellular adhesion. The protein is Integrin beta-like protein C (sibC) of Dictyostelium discoideum (Social amoeba).